A 657-amino-acid chain; its full sequence is tRNA 5-methylaminomethyl-2-thiouridine biosynthesis bifunctional protein MnmC (657 aa).

The interval M1–A236 is tRNA (mnm(5)s(2)U34)-methyltransferase. The interval I261 to D657 is FAD-dependent cmnm(5)s(2)U34 oxidoreductase.

It in the N-terminal section; belongs to the methyltransferase superfamily. tRNA (mnm(5)s(2)U34)-methyltransferase family. In the C-terminal section; belongs to the DAO family. FAD is required as a cofactor.

It localises to the cytoplasm. The enzyme catalyses 5-aminomethyl-2-thiouridine(34) in tRNA + S-adenosyl-L-methionine = 5-methylaminomethyl-2-thiouridine(34) in tRNA + S-adenosyl-L-homocysteine + H(+). Catalyzes the last two steps in the biosynthesis of 5-methylaminomethyl-2-thiouridine (mnm(5)s(2)U) at the wobble position (U34) in tRNA. Catalyzes the FAD-dependent demodification of cmnm(5)s(2)U34 to nm(5)s(2)U34, followed by the transfer of a methyl group from S-adenosyl-L-methionine to nm(5)s(2)U34, to form mnm(5)s(2)U34. The chain is tRNA 5-methylaminomethyl-2-thiouridine biosynthesis bifunctional protein MnmC from Burkholderia multivorans (strain ATCC 17616 / 249).